The sequence spans 381 residues: DNA replication and repair protein RecF (381 aa).

30 to 37 is a binding site for ATP; it reads GENAQGKT.

This sequence belongs to the RecF family.

It is found in the cytoplasm. In terms of biological role, the RecF protein is involved in DNA metabolism; it is required for DNA replication and normal SOS inducibility. RecF binds preferentially to single-stranded, linear DNA. It also seems to bind ATP. The chain is DNA replication and repair protein RecF from Lactobacillus delbrueckii subsp. bulgaricus (strain ATCC 11842 / DSM 20081 / BCRC 10696 / JCM 1002 / NBRC 13953 / NCIMB 11778 / NCTC 12712 / WDCM 00102 / Lb 14).